Consider the following 426-residue polypeptide: Histidine--tRNA ligase (426 aa).

It belongs to the class-II aminoacyl-tRNA synthetase family. As to quaternary structure, homodimer.

The protein resides in the cytoplasm. The catalysed reaction is tRNA(His) + L-histidine + ATP = L-histidyl-tRNA(His) + AMP + diphosphate + H(+). The sequence is that of Histidine--tRNA ligase from Malacoplasma penetrans (strain HF-2) (Mycoplasma penetrans).